The sequence spans 445 residues: Phosphoglucosamine mutase (445 aa).

S102 acts as the Phosphoserine intermediate in catalysis. Residues S102, D241, D243, and D245 each coordinate Mg(2+). S102 is subject to Phosphoserine.

The protein belongs to the phosphohexose mutase family. The cofactor is Mg(2+). Post-translationally, activated by phosphorylation.

It carries out the reaction alpha-D-glucosamine 1-phosphate = D-glucosamine 6-phosphate. Its function is as follows. Catalyzes the conversion of glucosamine-6-phosphate to glucosamine-1-phosphate. This chain is Phosphoglucosamine mutase, found in Zymomonas mobilis subsp. mobilis (strain ATCC 31821 / ZM4 / CP4).